The sequence spans 537 residues: Sodium/hydrogen exchanger 9B2 (537 aa).

Positions 1–10 are enriched in basic and acidic residues; that stretch reads MGDEDKRITY. The interval 1 to 33 is disordered; sequence MGDEDKRITYEDSEPSTGMNYTPSMHQETQEET. Residues 1–86 are Cytoplasmic-facing; it reads MGDEDKRITY…ACPPHGLLDR (86 aa). The segment covering 15-27 has biased composition (polar residues); the sequence is PSTGMNYTPSMHQ. At Ser-49 the chain carries Phosphoserine. A helical membrane pass occupies residues 87-104; it reads VVTNVTIIVLLWAVIWSI. The Extracellular segment spans residues 105–113; it reads TGSECLPGG. A helical membrane pass occupies residues 114-133; the sequence is NLFGIIILFYCAIIGGKLLG. Residues 134–144 are Cytoplasmic-facing; sequence LIKLPTLPPLP. Residues 145–161 form a helical membrane-spanning segment; sequence SLLGMLLAGFLIRNIPV. Over 162-171 the chain is Extracellular; that stretch reads INDNVQIKHK. The helical transmembrane segment at 172 to 189 threads the bilayer; that stretch reads WSSSLRSIALSIILVRAG. Over 190–200 the chain is Cytoplasmic; sequence LGLDSKALKKL. The chain crosses the membrane as a helical span at residues 201 to 227; that stretch reads KGVCVRLSMGPCIVEACTSALLAHYLL. At 228–233 the chain is on the extracellular side; the sequence is GLPWQW. Residues 234-242 traverse the membrane as a helical segment; the sequence is GFILGFVLG. Residues 243–270 lie on the Cytoplasmic side of the membrane; that stretch reads AVSPAVVVPSMLLLQGGGYGVEKGVPTL. Na(+)-binding residues include Val-244, Gly-275, Asp-278, and Asp-279. A helical membrane pass occupies residues 271-290; sequence LMAAGSFDDILAITGFNTCL. Topologically, residues 291 to 300 are extracellular; that stretch reads GIAFSTGSTV. Residues 301-324 traverse the membrane as a helical segment; it reads FNVLRGVLEVVIGVATGSVLGFFI. Over 325 to 339 the chain is Cytoplasmic; the sequence is QYFPSCDQDKLVCKR. The helical transmembrane segment at 340–357 threads the bilayer; it reads TFLVLGLSVLAVFSSVHF. At 358–361 the chain is on the extracellular side; sequence GFPG. The helical transmembrane segment at 362 to 373 threads the bilayer; the sequence is SGGLCTLVMAFL. Residues 374 to 390 are Cytoplasmic-facing; the sequence is AGMGWTSEKAEVEKIIA. A helical transmembrane segment spans residues 391–411; that stretch reads VAWDIFQPLLFGLIGAEVSIA. Over 412–417 the chain is Extracellular; it reads SLRPET. A helical transmembrane segment spans residues 418 to 440; the sequence is VGLCVATVGIAVLIRILTTFLMV. At 441-461 the chain is on the cytoplasmic side; the sequence is CFAGFNLKEKIFISFAWLPKA. A helical transmembrane segment spans residues 462 to 473; it reads TVQAAIGSVALD. The Extracellular segment spans residues 474–486; the sequence is TARSHGEKQLEDY. Residues 487–509 form a helical membrane-spanning segment; sequence GMDVLTVAFLSILITAPIGSLLI. Topologically, residues 510–537 are cytoplasmic; it reads GLLGPRLLQKVEHQNKDEEVQGETSVQV.

The protein belongs to the monovalent cation:proton antiporter 1 (CPA1) transporter (TC 2.A.36) family. As to quaternary structure, homodimer; dimerization is essential for SLC9B2 activity. Lipids seem to play a role in the stabilization of the dimerization subdomain.

The protein localises to the cell membrane. Its subcellular location is the mitochondrion membrane. It localises to the endosome membrane. It is found in the recycling endosome membrane. The protein resides in the cytoplasmic vesicle. The protein localises to the secretory vesicle. Its subcellular location is the synaptic vesicle membrane. It localises to the basolateral cell membrane. It is found in the apical cell membrane. The catalysed reaction is Li(+)(out) + H(+)(in) = Li(+)(in) + H(+)(out). It carries out the reaction Li(+)(in) + Na(+)(out) = Li(+)(out) + Na(+)(in). It catalyses the reaction Na(+)(in) + H(+)(out) = Na(+)(out) + H(+)(in). Its activity is regulated as follows. Allosterically inhibited by the N-terminal domain. Inhibited by phloretin. Its function is as follows. Electroneutral Na(+) Li(+)/H(+) antiporter that extrudes Na(+) or Li(+) in exchange for external protons across the membrane. Uses the proton gradient/membrane potential to extrude sodium. Contributes to the regulation of intracellular pH and sodium homeostasis. Also able to mediate Na(+)/Li(+) antiporter activity in kidney. May play a physiological role in renal tubular function and blood pressure homeostasis. Plays an important role for insulin secretion and clathrin-mediated endocytosis in beta-cells. Involved in sperm motility and fertility. It is controversial whether SLC9B2 plays a role in osteoclast differentiation or not. The sequence is that of Sodium/hydrogen exchanger 9B2 (SLC9B2) from Pongo abelii (Sumatran orangutan).